The primary structure comprises 735 residues: Polyribonucleotide nucleotidyltransferase (735 aa).

Residues D515 and D521 each contribute to the Mg(2+) site. The KH domain maps to 581–641 (PKLELFSVDP…KNVDAAKDYI (61 aa)). The tract at residues 649–671 (NSRGFGKKPHGHDRRDKDRQKPT) is disordered. The 60-residue stretch at 675–734 (GDEFDGVVKSVVDFGAFIELKDGVDGLLHISKIKTPLNVGDRLKVCVSEQKGNKISLSLV) folds into the S1 motif domain.

The protein belongs to the polyribonucleotide nucleotidyltransferase family. The cofactor is Mg(2+).

Its subcellular location is the cytoplasm. It catalyses the reaction RNA(n+1) + phosphate = RNA(n) + a ribonucleoside 5'-diphosphate. Its function is as follows. Involved in mRNA degradation. Catalyzes the phosphorolysis of single-stranded polyribonucleotides processively in the 3'- to 5'-direction. The polypeptide is Polyribonucleotide nucleotidyltransferase (Campylobacter curvus (strain 525.92)).